Consider the following 228-residue polypeptide: Urease accessory protein UreF 1 (228 aa).

It belongs to the UreF family. As to quaternary structure, ureD, UreF and UreG form a complex that acts as a GTP-hydrolysis-dependent molecular chaperone, activating the urease apoprotein by helping to assemble the nickel containing metallocenter of UreC. The UreE protein probably delivers the nickel.

Its subcellular location is the cytoplasm. Its function is as follows. Required for maturation of urease via the functional incorporation of the urease nickel metallocenter. This is Urease accessory protein UreF 1 from Brucella canis (strain ATCC 23365 / NCTC 10854 / RM-666).